We begin with the raw amino-acid sequence, 635 residues long: MLNRVQILMKTANNYETIEILRNYLRLYIILARNEEGRGILIYDDNIDSIMSMMNITRLEVIGLTTHCTKLRSSPPIPMSRLFMDEIDHESYYSPKTSDYPLIDIIRKRSHEQGDIALALEQYGIENTDSISEINEWLSSKGLACYRFVKFNDYRKQMYRKFSRCTIVDSMIIGHIGHHYIWIKNLETYTRPEIDVLPFDIKYISRDELWARISSSLDQTHIKTIAVSVYGAITDNGPMPYMISTYPGNTFVNFNSVKNLILNFLDWIKDIMTSTRTIILVGYMSNLFDIPLLTVYWPNNCGWKIYNNTLISSDGARVIWMDAYKFSCGLSLQDYCYHWGSKPESRPFDLIKKSDAKRNSKSLVKESMASLKSLYEAFETQSGALEVLMSPCRMFSFSRIEDMFLTSVINRVSENTGMGMYYPTNDIPSLFIESSICLDYIIVNNQESNKYRIKSVLDIISSKQYPAGRPNYVKNGTKGKLYIALCKVTVPTNDHIPVVYHDDDNTTTFITVLTSVDIETAIRAGYSIVELGALQWDDNIPELKHGLLDSIKMIYDLNAVTTNNLLEQLIENINFNNSSIISLFYTFAISYCRAFIYSIMETIDPVYISQFSYKELYVSSSYKDINESMSQMVKL.

The protein belongs to the orthopoxvirus OPG056 family. In terms of assembly, interacts with protein OPG164/A36. Interacts with protein OPG064/E2.

The protein localises to the virion membrane. It localises to the host endosome. Its function is as follows. Plays a role in intracellular enveloped virus (IEV) transport to the cell surface through microtubule transport. Together with protein OPG064/E2, forms a complex that interacts with host KLC2 (kinesin light chain isoform 2) to engage the kinesin-1 complex and thereby promote IEV trafficking. This chain is Protein OPG056 (OPG056), found in Vaccinia virus (strain Western Reserve) (VACV).